A 158-amino-acid chain; its full sequence is Transmembrane protein 50B (158 aa).

An N-acetylalanine modification is found at alanine 2. A run of 4 helical transmembrane segments spans residues 28 to 48, 56 to 76, 98 to 118, and 128 to 148; these read VVAGILFFTGWWIMIDAAVVY, HAFHTCGVFSTLAFFMINAVS, WLFIGFMLMFGSLIASMWILF, and VYPGLAVFFQNALIFFSTLIY.

This sequence belongs to the UPF0220 family. May form homotrimers or homodimers.

The protein localises to the endoplasmic reticulum membrane. The protein resides in the golgi apparatus membrane. This chain is Transmembrane protein 50B (TMEM50B), found in Bos taurus (Bovine).